Here is a 343-residue protein sequence, read N- to C-terminus: UDP-3-O-acylglucosamine N-acyltransferase (343 aa).

The active-site Proton acceptor is the H239.

The protein belongs to the transferase hexapeptide repeat family. LpxD subfamily. In terms of assembly, homotrimer.

It catalyses the reaction a UDP-3-O-[(3R)-3-hydroxyacyl]-alpha-D-glucosamine + a (3R)-hydroxyacyl-[ACP] = a UDP-2-N,3-O-bis[(3R)-3-hydroxyacyl]-alpha-D-glucosamine + holo-[ACP] + H(+). It functions in the pathway bacterial outer membrane biogenesis; LPS lipid A biosynthesis. Functionally, catalyzes the N-acylation of UDP-3-O-acylglucosamine using 3-hydroxyacyl-ACP as the acyl donor. Is involved in the biosynthesis of lipid A, a phosphorylated glycolipid that anchors the lipopolysaccharide to the outer membrane of the cell. This chain is UDP-3-O-acylglucosamine N-acyltransferase, found in Vibrio parahaemolyticus serotype O3:K6 (strain RIMD 2210633).